Consider the following 396-residue polypeptide: MSFRTLDGLDVRGRRVLVRLDLNVPMRDGRVSDLTRIERQAPTVRELAEGGARVIVMSHFDRPKGKRVQEMSLRPIAEALGAALGQPVAFVDDCIGGTVEEAVAGMKDGDVLVLENTRFHAAEEKNDPEFSRLLASLAEVYVNDAFSAAHRAHASTHGVTAHLPAYAGRLMQREVEALELALGSPTRPVAAIVGGAKVSTKLDLLGNLSTKVDVLVIGGAMANTFLAAQGIKVGKSLQEAEMHDTARAILETAKKAGCEILLPVDAVTATEFRADPPTRTVSINEIPDDAMMLDVGPETVRLLTERLSGVKTLVWNGPLGAFEISPFDKATVALAQSVAGLTETAGLVSVAGGGDTVAALKHAGVVERLTYVSAAGGAFLEWMEGKELPGVAVLRA.

Substrate is bound by residues 21–23 (DLN), Arg36, 59–62 (HFDR), Arg118, and Arg151. ATP-binding positions include Lys201, Glu323, and 353-356 (GGDT).

Belongs to the phosphoglycerate kinase family. As to quaternary structure, monomer.

Its subcellular location is the cytoplasm. It carries out the reaction (2R)-3-phosphoglycerate + ATP = (2R)-3-phospho-glyceroyl phosphate + ADP. The protein operates within carbohydrate degradation; glycolysis; pyruvate from D-glyceraldehyde 3-phosphate: step 2/5. The chain is Phosphoglycerate kinase from Granulibacter bethesdensis (strain ATCC BAA-1260 / CGDNIH1).